Here is a 601-residue protein sequence, read N- to C-terminus: ATP-dependent RNA helicase DeaD (601 aa).

The short motif at 6–34 (STFSFLGLNPFIIKSLSKMGYVKPSPIQA) is the Q motif element. The region spanning 37–208 (IPLLLEGRDV…KRFMKNPQEI (172 aa)) is the Helicase ATP-binding domain. Position 50 to 57 (50 to 57 (AQTGSGKT)) interacts with ATP. The DEAD box motif lies at 156-159 (DEAD). Residues 231-378 (KTDALIRFLE…EVQLPKIEVL (148 aa)) enclose the Helicase C-terminal domain. Positions 564-581 (SIFNKDKNNKRRFSDNRL) are enriched in basic and acidic residues. The interval 564–601 (SIFNKDKNNKRRFSDNRLNKSSSIKNETKSSFFRRKSV) is disordered. The span at 582 to 594 (NKSSSIKNETKSS) shows a compositional bias: polar residues.

The protein belongs to the DEAD box helicase family. DeaD/CsdA subfamily.

It localises to the cytoplasm. It catalyses the reaction ATP + H2O = ADP + phosphate + H(+). Its function is as follows. DEAD-box RNA helicase involved in various cellular processes at low temperature, including ribosome biogenesis, mRNA degradation and translation initiation. The chain is ATP-dependent RNA helicase DeaD from Buchnera aphidicola subsp. Schizaphis graminum (strain Sg).